The sequence spans 94 residues: Integration host factor subunit beta (94 aa).

It belongs to the bacterial histone-like protein family. Heterodimer of an alpha and a beta chain.

Functionally, this protein is one of the two subunits of integration host factor, a specific DNA-binding protein that functions in genetic recombination as well as in transcriptional and translational control. The chain is Integration host factor subunit beta from Haemophilus influenzae (strain 86-028NP).